A 769-amino-acid polypeptide reads, in one-letter code: CO(2)-response secreted protease (769 aa).

An N-terminal signal peptide occupies residues 1-27; sequence MKGITFFTPFLSFLYLLCILFMTETEA. One can recognise an Inhibitor I9 domain in the interval 35–108; the sequence is VYIVYMGSAS…VFPDPHFQLH (74 aa). The 502-residue stretch at 112–613 folds into the Peptidase S8 domain; it reads SWDFLKYQTS…AGELSSTASM (502 aa). Catalysis depends on charge relay system residues aspartate 145 and histidine 210. The region spanning 381 to 465 is the PA domain; that stretch reads ADASEGSARA…SKEAAEIFSY (85 aa). Serine 546 serves as the catalytic Charge relay system.

Belongs to the peptidase S8 family. Expressed in roots, guard cells and meristemoid and pavement cells.

It localises to the secreted. Its subcellular location is the cell wall. The enzyme catalyses Release of an N-terminal tripeptide from a polypeptide.. Functionally, mediates CO(2)-controlled stomatal development by cleaving peptide EPF2 (AC Q8LC53). Not active on peptides EPF1 (AC Q8S8I4) or stomagen (AC Q9SV72). In Arabidopsis thaliana (Mouse-ear cress), this protein is CO(2)-response secreted protease.